The primary structure comprises 73 residues: Antitoxin VapB20 (73 aa).

Functionally, antitoxin component of a type II toxin-antitoxin (TA) system. Upon expression in E.coli neutralizes the toxic effect of cognate toxin VapC20. This Mycobacterium tuberculosis (strain ATCC 25618 / H37Rv) protein is Antitoxin VapB20 (vapB20).